The sequence spans 434 residues: MNQTVNVIGAGLAGSEAAWQLAKRGINVRLYEMRPVKQTPAHHTDKFAELVCSNSLRANSLTNAVGVLKEEMRVLDSAIIAAADECSVPAGGALAVDRHEFAANVTEKVKNHPNVTVLHEEVTEIPEGPTIIATGPLTSEALSAKLRELTGEDYLYFYDAAAPIVEKDSLDMDKVYLKSRYDKGEAAYLNCPMTEEEFDRFYDALVSAETVPLKEFEKEIFFEGCMPIEVMAKRGKKTMLFGPMKPVGLEDPKTGKRPYAVVQLRQDDAAGTLYNIVGFQTHLKWGDQKEVLRLIPGLEQAEIVRYGVMHRNTFINSPSLLKATYQFKKRDDLFFAGQMTGVEGYVESAASGLVAGINAARLIQGKEPVTFSNETAIGSMAHYITETNKKNFQPMNANFGLFKELGVKIKNKQERNEQYASRALETIRNISKTL.

Gly-9 to Gly-14 is a binding site for FAD.

This sequence belongs to the MnmG family. TrmFO subfamily. FAD is required as a cofactor.

The protein localises to the cytoplasm. The enzyme catalyses uridine(54) in tRNA + (6R)-5,10-methylene-5,6,7,8-tetrahydrofolate + NADH + H(+) = 5-methyluridine(54) in tRNA + (6S)-5,6,7,8-tetrahydrofolate + NAD(+). The catalysed reaction is uridine(54) in tRNA + (6R)-5,10-methylene-5,6,7,8-tetrahydrofolate + NADPH + H(+) = 5-methyluridine(54) in tRNA + (6S)-5,6,7,8-tetrahydrofolate + NADP(+). In terms of biological role, catalyzes the folate-dependent formation of 5-methyl-uridine at position 54 (M-5-U54) in all tRNAs. The protein is Methylenetetrahydrofolate--tRNA-(uracil-5-)-methyltransferase TrmFO of Bacillus licheniformis (strain ATCC 14580 / DSM 13 / JCM 2505 / CCUG 7422 / NBRC 12200 / NCIMB 9375 / NCTC 10341 / NRRL NRS-1264 / Gibson 46).